The following is a 136-amino-acid chain: Nucleoside diphosphate kinase (136 aa).

ATP is bound by residues lysine 10, phenylalanine 58, arginine 86, threonine 92, arginine 104, and asparagine 114. The Pros-phosphohistidine intermediate role is filled by histidine 117.

The protein belongs to the NDK family. In terms of assembly, homotetramer. The cofactor is Mg(2+).

It localises to the cytoplasm. The enzyme catalyses a 2'-deoxyribonucleoside 5'-diphosphate + ATP = a 2'-deoxyribonucleoside 5'-triphosphate + ADP. It carries out the reaction a ribonucleoside 5'-diphosphate + ATP = a ribonucleoside 5'-triphosphate + ADP. Functionally, major role in the synthesis of nucleoside triphosphates other than ATP. The ATP gamma phosphate is transferred to the NDP beta phosphate via a ping-pong mechanism, using a phosphorylated active-site intermediate. This Mycobacterium sp. (strain MCS) protein is Nucleoside diphosphate kinase.